Here is a 443-residue protein sequence, read N- to C-terminus: Putative transporter AmpG 1 (443 aa).

Transmembrane regions (helical) follow at residues H6 to G26, I43 to F63, I74 to L96, V106 to A128, G144 to L164, K172 to S192, D255 to P275, V300 to M320, L326 to L346, I355 to I375, L394 to V414, and F416 to L436.

This sequence belongs to the major facilitator superfamily.

The protein localises to the cell inner membrane. The chain is Putative transporter AmpG 1 (ampG1) from Rickettsia typhi (strain ATCC VR-144 / Wilmington).